We begin with the raw amino-acid sequence, 156 residues long: ATP synthase subunit b (156 aa).

Residues 7 to 27 (LIGQLIAFALFVAFCMKFVWP) form a helical membrane-spanning segment.

This sequence belongs to the ATPase B chain family. As to quaternary structure, F-type ATPases have 2 components, F(1) - the catalytic core - and F(0) - the membrane proton channel. F(1) has five subunits: alpha(3), beta(3), gamma(1), delta(1), epsilon(1). F(0) has three main subunits: a(1), b(2) and c(10-14). The alpha and beta chains form an alternating ring which encloses part of the gamma chain. F(1) is attached to F(0) by a central stalk formed by the gamma and epsilon chains, while a peripheral stalk is formed by the delta and b chains.

It is found in the cell inner membrane. Functionally, f(1)F(0) ATP synthase produces ATP from ADP in the presence of a proton or sodium gradient. F-type ATPases consist of two structural domains, F(1) containing the extramembraneous catalytic core and F(0) containing the membrane proton channel, linked together by a central stalk and a peripheral stalk. During catalysis, ATP synthesis in the catalytic domain of F(1) is coupled via a rotary mechanism of the central stalk subunits to proton translocation. Component of the F(0) channel, it forms part of the peripheral stalk, linking F(1) to F(0). The polypeptide is ATP synthase subunit b (Actinobacillus pleuropneumoniae serotype 7 (strain AP76)).